A 242-amino-acid chain; its full sequence is 1-(5-phosphoribosyl)-5-[(5-phosphoribosylamino)methylideneamino] imidazole-4-carboxamide isomerase (242 aa).

The active-site Proton acceptor is Asp8. Residue Asp130 is the Proton donor of the active site.

Belongs to the HisA/HisF family.

It localises to the cytoplasm. The catalysed reaction is 1-(5-phospho-beta-D-ribosyl)-5-[(5-phospho-beta-D-ribosylamino)methylideneamino]imidazole-4-carboxamide = 5-[(5-phospho-1-deoxy-D-ribulos-1-ylimino)methylamino]-1-(5-phospho-beta-D-ribosyl)imidazole-4-carboxamide. It functions in the pathway amino-acid biosynthesis; L-histidine biosynthesis; L-histidine from 5-phospho-alpha-D-ribose 1-diphosphate: step 4/9. This Thioalkalivibrio sulfidiphilus (strain HL-EbGR7) protein is 1-(5-phosphoribosyl)-5-[(5-phosphoribosylamino)methylideneamino] imidazole-4-carboxamide isomerase.